The following is a 237-amino-acid chain: UPF0173 metal-dependent hydrolase HQ_3368A (237 aa).

The protein belongs to the UPF0173 family.

The chain is UPF0173 metal-dependent hydrolase HQ_3368A from Haloquadratum walsbyi (strain DSM 16790 / HBSQ001).